Consider the following 159-residue polypeptide: Cell division protein SepF (159 aa).

The interval 23–69 (DYIEEDEEQKPASKSAFDSDHTVTPLASTTAPAASSTTKPFPGGRVN) is disordered. Positions 44–64 (TVTPLASTTAPAASSTTKPFP) are enriched in low complexity.

The protein belongs to the SepF family. In terms of assembly, homodimer. Interacts with FtsZ.

The protein localises to the cytoplasm. Cell division protein that is part of the divisome complex and is recruited early to the Z-ring. Probably stimulates Z-ring formation, perhaps through the cross-linking of FtsZ protofilaments. Its function overlaps with FtsA. The polypeptide is Cell division protein SepF (Bifidobacterium longum (strain DJO10A)).